The primary structure comprises 509 residues: Heat shock 70 kDa protein 14 (509 aa).

It belongs to the heat shock protein 70 family. In terms of assembly, component of ribosome-associated complex (RAC), a heterodimer composed of Hsp70/DnaK-type chaperone HSPA14 and Hsp40/DnaJ-type chaperone DNAJC2.

It is found in the cytoplasm. It localises to the cytosol. Functionally, component of the ribosome-associated complex (RAC), a complex involved in folding or maintaining nascent polypeptides in a folding-competent state. In the RAC complex, binds to the nascent polypeptide chain, while DNAJC2 stimulates its ATPase activity. This is Heat shock 70 kDa protein 14 (Hspa14) from Mus musculus (Mouse).